Consider the following 473-residue polypeptide: Serine/threonine-protein phosphatase T (473 aa).

TPR repeat units follow at residues 5–38 (ALEL…DSTN), 40–72 (ILYS…DPEY), and 73–106 (AKAY…APSD). The tract at residues 159-472 (KQITKEFVED…MAYANGLLSG (314 aa)) is catalytic. Mn(2+)-binding residues include Asp217, His219, Asp246, and Asn278. His279 serves as the catalytic Proton donor/acceptor. Mn(2+) is bound by residues His327 and His404.

This sequence belongs to the PPP phosphatase family. PP-5 (PP-T) subfamily. Mg(2+) serves as cofactor. Mn(2+) is required as a cofactor.

It localises to the nucleus. It catalyses the reaction O-phospho-L-seryl-[protein] + H2O = L-seryl-[protein] + phosphate. The catalysed reaction is O-phospho-L-threonyl-[protein] + H2O = L-threonyl-[protein] + phosphate. Its function is as follows. Protein phosphatase that specifically binds to and dephosphorylates the molecular chaperone Hsp90. Dephosphorylation positively regulates the Hsp90 chaperone machinery. This is Serine/threonine-protein phosphatase T (ppt1) from Schizosaccharomyces pombe (strain 972 / ATCC 24843) (Fission yeast).